The primary structure comprises 334 residues: Spermidine synthase 1 (334 aa).

Residues 1 to 37 form a disordered region; that stretch reads MAAPENTLHSTDSPLKRQREDEVNGVSDTLSKEPQPN. The segment covering 26–37 has biased composition (polar residues); that stretch reads VSDTLSKEPQPN. A PABS domain is found at 44 to 281; the sequence is PGWFSEISPM…GMIGFMLCST (238 aa). Residue Gln-75 participates in S-adenosyl 3-(methylsulfanyl)propylamine binding. Tyr-105 serves as a coordination point for putrescine. S-adenosyl 3-(methylsulfanyl)propylamine-binding positions include Gln-106, Asp-130, Glu-150, 181–182, and Asp-200; that span reads DG. Asp-200 acts as the Proton acceptor in catalysis. Residues 200–203 and Tyr-269 contribute to the putrescine site; that span reads DSSD.

The protein belongs to the spermidine/spermine synthase family.

The enzyme catalyses S-adenosyl 3-(methylsulfanyl)propylamine + putrescine = S-methyl-5'-thioadenosine + spermidine + H(+). It participates in amine and polyamine biosynthesis; spermidine biosynthesis; spermidine from putrescine: step 1/1. This is Spermidine synthase 1 (SPDSYN1) from Pisum sativum (Garden pea).